The chain runs to 259 residues: Dihydroorotate dehydrogenase B (NAD(+)), electron transfer subunit (259 aa).

The region spanning 2–102 (MQKQNMIVVN…LGPLGHGFPV (101 aa)) is the FAD-binding FR-type domain. Residues 53-56 (RPIS), 70-72 (LYR), and 77-78 (GT) each bind FAD. Residues Cys221, Cys226, Cys229, and Cys246 each coordinate [2Fe-2S] cluster.

The protein belongs to the PyrK family. In terms of assembly, heterotetramer of 2 PyrK and 2 PyrD type B subunits. [2Fe-2S] cluster serves as cofactor. The cofactor is FAD.

The protein operates within pyrimidine metabolism; UMP biosynthesis via de novo pathway; orotate from (S)-dihydroorotate (NAD(+) route): step 1/1. Functionally, responsible for channeling the electrons from the oxidation of dihydroorotate from the FMN redox center in the PyrD type B subunit to the ultimate electron acceptor NAD(+). The sequence is that of Dihydroorotate dehydrogenase B (NAD(+)), electron transfer subunit from Bacillus cereus (strain ZK / E33L).